Here is an 850-residue protein sequence, read N- to C-terminus: DNA polymerase I (850 aa).

One can recognise a 5'-3' exonuclease domain in the interval 1–288; sequence MKLVIFDGNS…SIIKRLGLSE (288 aa). The tract at residues 470 to 850 is polymerase; the sequence is VDRDALIQYT…KEGLNWYETK (381 aa).

Belongs to the DNA polymerase type-A family.

The catalysed reaction is DNA(n) + a 2'-deoxyribonucleoside 5'-triphosphate = DNA(n+1) + diphosphate. Functionally, in addition to polymerase activity, this DNA polymerase exhibits 3'-5' and 5'-3' exonuclease activity. The chain is DNA polymerase I (polA) from Caldicellulosiruptor bescii (strain ATCC BAA-1888 / DSM 6725 / KCTC 15123 / Z-1320) (Anaerocellum thermophilum).